The following is a 286-amino-acid chain: ATP phosphoribosyltransferase (286 aa).

Belongs to the ATP phosphoribosyltransferase family. Long subfamily. Mg(2+) is required as a cofactor.

Its subcellular location is the cytoplasm. It catalyses the reaction 1-(5-phospho-beta-D-ribosyl)-ATP + diphosphate = 5-phospho-alpha-D-ribose 1-diphosphate + ATP. It functions in the pathway amino-acid biosynthesis; L-histidine biosynthesis; L-histidine from 5-phospho-alpha-D-ribose 1-diphosphate: step 1/9. Feedback inhibited by histidine. Functionally, catalyzes the condensation of ATP and 5-phosphoribose 1-diphosphate to form N'-(5'-phosphoribosyl)-ATP (PR-ATP). Has a crucial role in the pathway because the rate of histidine biosynthesis seems to be controlled primarily by regulation of HisG enzymatic activity. The sequence is that of ATP phosphoribosyltransferase from Arthrobacter sp. (strain FB24).